Consider the following 126-residue polypeptide: Methylglyoxal synthase (126 aa).

In terms of domain architecture, MGS-like spans 1 to 126 (MKALALIAHD…IAWIRKGTPQ (126 aa)). Residues H9, K13, 35–38 (TGTT), and 55–56 (SG) each bind substrate. D61 (proton donor/acceptor) is an active-site residue. H88 serves as a coordination point for substrate.

The protein belongs to the methylglyoxal synthase family.

The catalysed reaction is dihydroxyacetone phosphate = methylglyoxal + phosphate. Its function is as follows. Catalyzes the formation of methylglyoxal from dihydroxyacetone phosphate. This chain is Methylglyoxal synthase, found in Thermus thermophilus (strain ATCC BAA-163 / DSM 7039 / HB27).